The sequence spans 260 residues: MKTFDSQAENSPAVIGRSLRNRPLARKKLSEMVEEELEQMIRRKEFGEGEQLPSERELMAFFNVGRPSVREALAALKRKGLVQINNGERARVSRPSADTIIGELSGMAKDFLAHPGGIAHFEQLRLFFESSLVRYAAENATDAQIDLLAKALEINSQSLDDNALFIRSDVDFHRVLAEIPGNPIFKAIHVALLDWLIAARPTVPDRELYEHNSVSYQQHIAIVDAIRQRDPDAADRALQTHLNSVSATWHALGQQSKRKK.

The HTH gntR-type domain maps to 27 to 95; sequence KKLSEMVEEE…NGERARVSRP (69 aa). The segment at residues 55 to 74 is a DNA-binding region (H-T-H motif); sequence ERELMAFFNVGRPSVREALA.

It belongs to the NanR family.

Transcriptional repressor that controls expression of the genes required for the catabolism of sialic acids. The protein is HTH-type transcriptional repressor NanR of Citrobacter rodentium (strain ICC168) (Citrobacter freundii biotype 4280).